Consider the following 2506-residue polypeptide: Zinc finger protein 462 (2506 aa).

C2H2-type zinc fingers lie at residues 4–27 (LQCD…QDVH), 108–131 (FQCK…RKVH), and 162–185 (FSCQ…KMYH). A Glycyl lysine isopeptide (Lys-Gly) (interchain with G-Cter in SUMO1); alternate cross-link involves residue Lys20. A Glycyl lysine isopeptide (Lys-Gly) (interchain with G-Cter in SUMO2); alternate cross-link involves residue Lys20. Residues 215 to 241 (PCKELPAEVVERSILESMVKPLTKSRG) are interaction with PBX1. Glycyl lysine isopeptide (Lys-Gly) (interchain with G-Cter in SUMO2) cross-links involve residues Lys234 and Lys271. Positions 280–299 (QEGTNLPDVPNKSAPSPTSN) are disordered. O-linked (GlcNAc6P) serine glycans are attached at residues Ser292 and Ser309. Residues Lys337, Lys347, and Lys349 each participate in a glycyl lysine isopeptide (Lys-Gly) (interchain with G-Cter in SUMO2) cross-link. The tract at residues 337–356 (KFSPMSYPQMKPKSPHNSGL) is disordered. A phosphoserine mark is found at Ser350 and Ser354. Lys428 is covalently cross-linked (Glycyl lysine isopeptide (Lys-Gly) (interchain with G-Cter in SUMO2)). C2H2-type zinc fingers lie at residues 439–462 (FQCP…ENIH) and 470–492 (YKCD…KQCH). Lys484 is covalently cross-linked (Glycyl lysine isopeptide (Lys-Gly) (interchain with G-Cter in SUMO2)). Residues 535–596 (DPLQQQQPPQ…QPQPPTQAAP (62 aa)) are disordered. Over residues 542–593 (PPQPPPPPPPPPPSQPQPLQQPQPPQLQPPHQVPPQPQTQPPPTQQPQPPTQ) the composition is skewed to pro residues. The C2H2-type 6 zinc finger occupies 600-623 (YKCTMCNYSTTTLKGLRVHQQHKH). Residues Lys631, Lys657, and Lys668 each participate in a glycyl lysine isopeptide (Lys-Gly) (interchain with G-Cter in SUMO2) cross-link. A disordered region spans residues 636-661 (PSSLPLENETDSHPSSSNTVKKSQTS). The segment covering 648 to 661 (HPSSSNTVKKSQTS) has biased composition (polar residues). Ser688 is modified (phosphoserine). Residues Lys706 and Asp849 each participate in a glycyl lysine isopeptide (Lys-Gly) (interchain with G-Cter in SUMO2) cross-link. C2H2-type zinc fingers lie at residues 843-866 (YYCK…QRMH), 886-908 (YRCL…YGEH), and 925-948 (YRCR…QRMH). Lys986 participates in a covalent cross-link: Glycyl lysine isopeptide (Lys-Gly) (interchain with G-Cter in SUMO2). The C2H2-type 10 zinc finger occupies 1030 to 1053 (YDCDVCSFASPNMHSVLVHYQKKH). Ser1090 bears the Phosphoserine mark. A Glycyl lysine isopeptide (Lys-Gly) (interchain with G-Cter in SUMO2) cross-link involves residue Lys1135. Residues 1157–1186 (MRGVEGPQGSPRPPAPIQQLNRSSSERDGP) are disordered. Position 1166 is a phosphoserine (Ser1166). Glycyl lysine isopeptide (Lys-Gly) (interchain with G-Cter in SUMO2) cross-links involve residues Lys1206, Lys1214, Lys1220, and Lys1243. 2 consecutive C2H2-type zinc fingers follow at residues 1265–1288 (LKCR…KKDH) and 1470–1493 (YQCT…GKKH). Lys1499 is covalently cross-linked (Glycyl lysine isopeptide (Lys-Gly) (interchain with G-Cter in SUMO2)). The segment at 1515 to 1538 (YKCRHCPYINTRIHGVLTHYQKRH) adopts a C2H2-type 13 zinc-finger fold. Residues Lys1571 and Lys1591 each participate in a glycyl lysine isopeptide (Lys-Gly) (interchain with G-Cter in SUMO2) cross-link. 3 C2H2-type zinc fingers span residues 1577–1600 (YRCK…EKYH), 1660–1683 (FRCQ…RIKH), and 1697–1720 (FKCA…QKRH). Glycyl lysine isopeptide (Lys-Gly) (interchain with G-Cter in SUMO2) cross-links involve residues Lys1698 and Lys1780. The C2H2-type 17 zinc-finger motif lies at 1892–1914 (YQCKHCDSKLQSTAELTSHLNIH). Residue Lys1946 forms a Glycyl lysine isopeptide (Lys-Gly) (interchain with G-Cter in SUMO2) linkage. A C2H2-type 18; degenerate zinc finger spans residues 1968-1992 (YKCKFCVEVHPTLRAICNHLRKHVQ). Lys2004 is subject to N6-methyllysine. 3 C2H2-type zinc fingers span residues 2025-2048 (YSCQ…QTHH), 2054-2077 (FRCK…LKAH), and 2083-2106 (YKCS…LKVH). Residue Lys2104 forms a Glycyl lysine isopeptide (Lys-Gly) (interchain with G-Cter in SUMO2) linkage. A disordered region spans residues 2122 to 2152 (SSHSHHSSQKATPAEEVEDSNDSSYSEPPDV). Positions 2143 to 2152 (DSSYSEPPDV) are enriched in polar residues. Phosphoserine is present on residues Ser2172 and Ser2177. C2H2-type zinc fingers lie at residues 2191 to 2214 (LHCE…RDKH), 2220 to 2243 (FKCK…EAGH), and 2254 to 2276 (LRCP…IVLH). Residue Lys2293 forms a Glycyl lysine isopeptide (Lys-Gly) (interchain with G-Cter in SUMO2) linkage. 2 consecutive C2H2-type zinc fingers follow at residues 2300–2322 (FRCD…IEKH) and 2328–2351 (YKCQ…RDEH). Positions 2371-2396 (MKEKMESSSSDDEDKEEEMNSKAEDR) are disordered. Residues 2414 to 2436 (FPCEFCGRAFSQGSEWERHVLRH) form a C2H2-type 27 zinc finger. Residues Lys2444 and Lys2504 each participate in a glycyl lysine isopeptide (Lys-Gly) (interchain with G-Cter in SUMO2) cross-link.

Interacts with PBX1; this interaction prevents PBX1-HOXA9 heterodimer from forming and binding to DNA. Post-translationally, O-GlcNAcylated with O-GlcNAc-6-phosphate.

It is found in the nucleus. Its function is as follows. Zinc finger nuclear factor involved in transcription by regulating chromatin structure and organization. Involved in the pluripotency and differentiation of embryonic stem cells by regulating SOX2, POU5F1/OCT4, and NANOG. By binding PBX1, prevents the heterodimerization of PBX1 and HOXA9 and their binding to DNA. Regulates neuronal development and neural cell differentiation. The chain is Zinc finger protein 462 from Homo sapiens (Human).